We begin with the raw amino-acid sequence, 1717 residues long: PH domain leucine-rich repeat-containing protein phosphatase 1 (1717 aa).

Residue Met-1 is modified to N-acetylmethionine. Disordered stretches follow at residues 1-25 (MEPA…SAPA), 41-118 (LAAA…GANS), 136-156 (AASS…GAAG), and 252-470 (PGAA…PPPT). Residues 98-110 (APQPIAGGAAPVP) show a composition bias toward low complexity. Pro residues predominate over residues 262-274 (EPPPEAGPRLAPP). 2 stretches are compositionally biased toward low complexity: residues 313–325 (SRRA…DSSP) and 333–345 (PVSS…PVVS). The residue at position 317 (Ser-317) is a Phosphoserine. Polar residues-rich tracts occupy residues 346–358 (DTES…SAES) and 408–417 (QTASSPQPQQ). Ser-412 bears the Phosphoserine mark. Residues 536–636 (RIQLSGMYNV…WLRQVSKVAS (101 aa)) enclose the PH domain. 21 LRR repeats span residues 638–659 (RISS…LFYS), 661–682 (DLTH…PAAR), 692–712 (KLKS…AVCS), 715–736 (TLAE…VGVM), 738–760 (NLQT…ENMK), 761–783 (QLSY…EKLT), 784–804 (AVDK…QALR), 808–831 (HIKH…DFLQ), 832–853 (HVTQ…IFNN), 873–894 (FLKA…PVPN), 895–916 (YLSY…VCES), 918–939 (KLEV…LFCN), 941–962 (SLRK…LERT), 963–984 (SVEV…LLMK), 987–1008 (SLRF…TLSE), 1013–1033 (ILQE…PLLT), 1037–1058 (HLKI…KMAK), 1061–1082 (ELEE…IMNC), 1084–1105 (RMHT…MQLP), 1106–1127 (EIKC…ENLP), and 1129–1150 (KLQE…TLEL). The interaction with NHERF1 stretch occupies residues 1076–1205 (PTTIMNCRRM…NNFCDNREAL (130 aa)). One can recognise a PPM-type phosphatase domain in the interval 1175–1422 (SHGYTEASGV…DSISAVVVQL (248 aa)). Mn(2+)-binding residues include Asp-1210, Gly-1211, Lys-1374, and Asp-1413. 2 disordered regions span residues 1458–1510 (DRPS…SPAY) and 1673–1717 (EVKE…DTPL). Low complexity predominate over residues 1468–1489 (SSSSGMASEISSELSTSEMSSE). A PDZ-binding; required for interaction with NHERF1 motif is present at residues 1715–1717 (TPL).

As to quaternary structure, interacts with the nucleotide free form of K-Ras (KRAS) via its LRR repeats. Interacts with AKT2, AKT3, PRKCB isoform beta-II, STK4, RPS6KB1, RAF1. Isoform 1 (predominantly) and isoform 2 interact with BRAP. Interacts with FKBP5; FKBP5 acts as a scaffold for PHLPP1 and Akt. Interacts with SCRIB; SCRIB acts as a scaffold for PHLPP1 and Akt. Interacts with NHERF1; NHERF1 scaffolds a heterotrimeric complex with PTEN at the plasma membrane. Interacts with WDR48 and USP12. The cofactor is Mn(2+). As to expression, in colorectal cancer tissue, expression is highest in the surface epithelium of normal colonic mucosa adjacent to the cancer tissue but is largely excluded from the crypt bases. Expression is lost or significantly decreased in 78% of tested tumors (at protein level). Ubiquitously expressed in non-cancerous tissues.

It localises to the cytoplasm. Its subcellular location is the membrane. It is found in the nucleus. The protein localises to the cell membrane. The catalysed reaction is O-phospho-L-seryl-[protein] + H2O = L-seryl-[protein] + phosphate. The enzyme catalyses O-phospho-L-threonyl-[protein] + H2O = L-threonyl-[protein] + phosphate. With respect to regulation, insensitive to okadaic acid. Deubiquitination by WDR48-USP12 complex positively regulates PHLPP1 stability. In terms of biological role, protein phosphatase involved in regulation of Akt and PKC signaling. Mediates dephosphorylation in the C-terminal domain hydrophobic motif of members of the AGC Ser/Thr protein kinase family; specifically acts on 'Ser-473' of AKT2 and AKT3, 'Ser-660' of PRKCB and 'Ser-657' of PRKCA. Isoform 2 seems to have a major role in regulating Akt signaling in hippocampal neurons. Akt regulates the balance between cell survival and apoptosis through a cascade that primarily alters the function of transcription factors that regulate pro- and antiapoptotic genes. Dephosphorylation of 'Ser-473' of Akt triggers apoptosis and suppression of tumor growth. Dephosphorylation of PRKCA and PRKCB leads to their destabilization and degradation. Dephosphorylates STK4 on 'Thr-387' leading to STK4 activation and apoptosis. Dephosphorylates RPS6KB1 and is involved in regulation of cap-dependent translation. Inhibits cancer cell proliferation and may act as a tumor suppressor. Dephosphorylates RAF1 inhibiting its kinase activity. May act as a negative regulator of K-Ras signaling in membrane rafts. Involved in the hippocampus-dependent long-term memory formation. Involved in circadian control by regulating the consolidation of circadian periodicity after resetting. Involved in development and function of regulatory T-cells. This Homo sapiens (Human) protein is PH domain leucine-rich repeat-containing protein phosphatase 1 (PHLPP1).